The sequence spans 622 residues: Chaperone protein HscA homolog (622 aa).

The protein belongs to the heat shock protein 70 family.

Chaperone involved in the maturation of iron-sulfur cluster-containing proteins. Has a low intrinsic ATPase activity which is markedly stimulated by HscB. The polypeptide is Chaperone protein HscA homolog (Pseudoalteromonas atlantica (strain T6c / ATCC BAA-1087)).